Reading from the N-terminus, the 497-residue chain is Ethanolamine-phosphate phospho-lyase (497 aa).

Lysine 278 bears the N6-(pyridoxal phosphate)lysine mark. Residues 440 to 497 (TGAETESGISKNTPCRTKMPKEAQSELLRDSSLESRENPSQKRNGLCTDSLLSKRLRT) are disordered. Residues 458–479 (MPKEAQSELLRDSSLESRENPS) are compositionally biased toward basic and acidic residues.

The protein belongs to the class-III pyridoxal-phosphate-dependent aminotransferase family. Homotetramer. The cofactor is pyridoxal 5'-phosphate.

It is found in the mitochondrion. It catalyses the reaction phosphoethanolamine + H2O = acetaldehyde + NH4(+) + phosphate. Functionally, catalyzes the pyridoxal-phosphate-dependent breakdown of phosphoethanolamine, converting it to ammonia, inorganic phosphate and acetaldehyde. This is Ethanolamine-phosphate phospho-lyase (ETNPPL) from Bos taurus (Bovine).